Here is a 161-residue protein sequence, read N- to C-terminus: Ribosome maturation factor RimP (161 aa).

The protein belongs to the RimP family.

The protein resides in the cytoplasm. Required for maturation of 30S ribosomal subunits. In Rickettsia typhi (strain ATCC VR-144 / Wilmington), this protein is Ribosome maturation factor RimP.